The chain runs to 453 residues: Tubulin alpha-2 chain (453 aa).

GTP is bound at residue Gln-11. The residue at position 40 (Lys-40) is an N6-acetyllysine. Residues Glu-71, Gly-144, Thr-145, Thr-179, Asn-206, and Asn-228 each contribute to the GTP site. Position 71 (Glu-71) interacts with Mg(2+). Glu-254 is a catalytic residue. A disordered region spans residues 432 to 453 (YEEVGAETAEGEGEEEDFGEEY).

The protein belongs to the tubulin family. As to quaternary structure, dimer of alpha and beta chains. A typical microtubule is a hollow water-filled tube with an outer diameter of 25 nm and an inner diameter of 15 nM. Alpha-beta heterodimers associate head-to-tail to form protofilaments running lengthwise along the microtubule wall with the beta-tubulin subunit facing the microtubule plus end conferring a structural polarity. Microtubules usually have 13 protofilaments but different protofilament numbers can be found in some organisms and specialized cells. Requires Mg(2+) as cofactor. Undergoes a tyrosination/detyrosination cycle, the cyclic removal and re-addition of a C-terminal tyrosine residue by the enzymes tubulin tyrosine carboxypeptidase (TTCP) and tubulin tyrosine ligase (TTL), respectively. In terms of processing, acetylation of alpha chains at Lys-40 stabilizes microtubules and affects affinity and processivity of microtubule motors. This modification has a role in multiple cellular functions, ranging from cell motility, cell cycle progression or cell differentiation to intracellular trafficking and signaling.

It is found in the cytoplasm. It localises to the cytoskeleton. The enzyme catalyses GTP + H2O = GDP + phosphate + H(+). Functionally, tubulin is the major constituent of microtubules, a cylinder consisting of laterally associated linear protofilaments composed of alpha- and beta-tubulin heterodimers. Microtubules grow by the addition of GTP-tubulin dimers to the microtubule end, where a stabilizing cap forms. Below the cap, tubulin dimers are in GDP-bound state, owing to GTPase activity of alpha-tubulin. This is Tubulin alpha-2 chain (TUBA2) from Pelvetia fastigiata (Brown alga).